The following is a 417-amino-acid chain: Gamma-glutamyl phosphate reductase (417 aa).

The protein belongs to the gamma-glutamyl phosphate reductase family.

Its subcellular location is the cytoplasm. The catalysed reaction is L-glutamate 5-semialdehyde + phosphate + NADP(+) = L-glutamyl 5-phosphate + NADPH + H(+). It participates in amino-acid biosynthesis; L-proline biosynthesis; L-glutamate 5-semialdehyde from L-glutamate: step 2/2. Catalyzes the NADPH-dependent reduction of L-glutamate 5-phosphate into L-glutamate 5-semialdehyde and phosphate. The product spontaneously undergoes cyclization to form 1-pyrroline-5-carboxylate. The protein is Gamma-glutamyl phosphate reductase of Escherichia coli O6:H1 (strain CFT073 / ATCC 700928 / UPEC).